We begin with the raw amino-acid sequence, 447 residues long: ATP-dependent protease ATPase subunit HslU (447 aa).

ATP-binding positions include I17, 59–64 (GVGKTE), D256, E321, and R393.

This sequence belongs to the ClpX chaperone family. HslU subfamily. As to quaternary structure, a double ring-shaped homohexamer of HslV is capped on each side by a ring-shaped HslU homohexamer. The assembly of the HslU/HslV complex is dependent on binding of ATP.

The protein localises to the cytoplasm. Functionally, ATPase subunit of a proteasome-like degradation complex; this subunit has chaperone activity. The binding of ATP and its subsequent hydrolysis by HslU are essential for unfolding of protein substrates subsequently hydrolyzed by HslV. HslU recognizes the N-terminal part of its protein substrates and unfolds these before they are guided to HslV for hydrolysis. The protein is ATP-dependent protease ATPase subunit HslU of Pseudomonas putida (strain GB-1).